The primary structure comprises 105 residues: 5,5'-dehydrodivanillate O-demethylase ferredoxin subunit (105 aa).

The 2Fe-2S ferredoxin-type domain maps to 2-105 (AQLKVVTRDG…GMTVTIAPED (104 aa)). [2Fe-2S] cluster-binding residues include cysteine 40, cysteine 46, cysteine 49, and cysteine 86.

This sequence belongs to the adrenodoxin/putidaredoxin family. As to quaternary structure, monomer. The three-component monooxygenase is composed of an oxygenase (LigXa), a ferredoxin (LigXc) and a ferredoxin reductase (LigXd). The cofactor is [2Fe-2S] cluster.

The catalysed reaction is 5,5'-dehydrodivanillate + NADH + O2 + H(+) = 2,2',3-trihydroxy-3'-methoxy-5,5'-dicarboxybiphenyl + formaldehyde + NAD(+) + H2O. Its function is as follows. Involved in the catabolism of 5,5'-dehydrodivanillate (DDVA), an intermediate in the biodegradation of lignin. Part of a three-component monooxygenase that catalyzes the O-demethylation of DDVA, leading to the formation of 2,2',3-trihydroxy-3'-methoxy-5,5'-dicarboxybiphenyl (OH-DDVA). LigXc probably functions as an intermediate electron transfer protein between LigXd and LigXa. The sequence is that of 5,5'-dehydrodivanillate O-demethylase ferredoxin subunit from Sphingobium sp. (strain NBRC 103272 / SYK-6).